Here is a 395-residue protein sequence, read N- to C-terminus: Innexin inx3 (395 aa).

The Cytoplasmic segment spans residues 1 to 37 (MAVFGMVSAVSGFIKIRYLLDKAVIDNMVFRCHYRIT). The chain crosses the membrane as a helical span at residues 38-58 (TAILFTCCIIVTANNLIGDPI). Residues 59 to 114 (SCINDGAIPMHVINTFCWITYTYTIPGQQHRQIGTDVAGPGLGNEYGQEKRYHSYY) are Extracellular-facing. The helical transmembrane segment at 115–135 (QWVPFVLFFQGLMFYVPHWVW) threads the bilayer. The Cytoplasmic portion of the chain corresponds to 136 to 183 (KNMEDGKIRMITDGLRGMVSVPDDYRRDRQDRILKYFVNSLNTHNGYS). A helical membrane pass occupies residues 184 to 204 (FAYFFCELLNFINVIVNIFMV). At 205-272 (DKFLGGAFMS…VLALNILNEK (68 aa)) the chain is on the extracellular side. A helical transmembrane segment spans residues 273-293 (IYIFLWFWFIILATISGVAVL). Over 294–395 (YSLVVIMMPT…TFGGGKETET (102 aa)) the chain is Cytoplasmic. Phosphoserine is present on residues S366 and S377. Residue Y381 is modified to Phosphotyrosine.

It belongs to the pannexin family. As to quaternary structure, heterooligomer of Inx2 (via cytoplasmic C-terminal region) and Inx3 (via cytoplasmic C-terminal region). In ovary, expressed in nurse cells and follicle cells. Expressed in embryonic epithelial cells. Ubiquitously expressed in stage 5 embryos. Expressed in foregut and hindgut from stage 11-17 and in proventriculus, epidermis and CNS in stage 16 embryos (at protein level). Expressed in anterior and ventral regions in stage 8 embryos. Repeating epidermal pattern emerges at stage 11, refines to one or two cells at each side of the segment borders by stage 13. Expressed in the imaginal wing disk. In pupae, expressed in the CNS and in secondary and tertiary pigment cells of the retina.

It localises to the cell membrane. Its subcellular location is the cell junction. The protein localises to the gap junction. The protein resides in the cytoplasm. It is found in the lateral cell membrane. It localises to the apicolateral cell membrane. Functionally, structural components of the gap junctions. Essential for proper epithelial development of the epidermis. This is Innexin inx3 (Inx3) from Drosophila melanogaster (Fruit fly).